Reading from the N-terminus, the 904-residue chain is E3 SUMO-protein ligase SIZ1 (904 aa).

Acidic residues predominate over residues 1–13 (MINLEDYWEDETP). The tract at residues 1-21 (MINLEDYWEDETPGPDREPTN) is disordered. The SAP domain occupies 34–68 (MELLKVSELKDICRSVSFPVSGRKAVLQDLIRNFL). Positions 122-170 (MEGPPTVQQQSPSVIRQSPTQRRKTSTTSSTSRAPPPTNPDASSSSSSF) are disordered. Over residues 127-136 (TVQQQSPSVI) the composition is skewed to polar residues. Ser-132 carries the post-translational modification Phosphoserine. Residues 137–154 (RQSPTQRRKTSTTSSTSR) are compositionally biased toward low complexity. In terms of domain architecture, PINIT spans 162 to 314 (DASSSSSSFA…KLFGYIVEMI (153 aa)). The segment at 344 to 431 (EDEEMGLTTT…LQNCQKNVEQ (88 aa)) adopts an SP-RING-type zinc-finger fold. Positions 377, 379, 400, and 403 each coordinate Zn(2+). Disordered stretches follow at residues 443-584 (ILED…DDDR), 596-616 (STNTDILTEKGSSAPSRTLDP), and 672-733 (SPDV…ISDS). Residues 444–454 (LEDDDDSDSDS) are compositionally biased toward acidic residues. Residues 501-511 (NNHDDSNRHSN) are compositionally biased toward basic and acidic residues. Low complexity predominate over residues 512–553 (DNNNNSIKNNDSHNKNNNNNNNNNNNNNDNNNSIENNDSNSN). 3 stretches are compositionally biased toward polar residues: residues 561-574 (RSNTPSHNHTKNLM), 596-611 (STNTDILTEKGSSAPS), and 672-683 (SPDVSVSSPTPR). Residues 684–699 (NTASNASSSALSTPPL) show a composition bias toward low complexity. Positions 721–733 (INSNSYTASISDS) are enriched in polar residues. Ser-794 carries the post-translational modification Phosphoserine. Residues 794-904 (SLPTTEAITR…QDYGKKYNSG (111 aa)) are required for localization at the bud neck. The span at 877 to 894 (RQLSNTSSTSPIMGTWKT) shows a compositional bias: polar residues. A disordered region spans residues 877–904 (RQLSNTSSTSPIMGTWKTQDYGKKYNSG).

This sequence belongs to the PIAS family. As to quaternary structure, interacts with UBC9 and CDC3. Phosphorylated in early M-phase. Post-translationally, autosumoylated upon ethanol stress.

The protein localises to the cytoplasm. The protein resides in the nucleus. Its subcellular location is the bud neck. The protein operates within protein modification; protein sumoylation. Functionally, acts as an E3 ligase mediating SUMO/Smt3 attachment to septins and PCNA. May be involved in chromosome maintenance. In Saccharomyces cerevisiae (strain ATCC 204508 / S288c) (Baker's yeast), this protein is E3 SUMO-protein ligase SIZ1 (SIZ1).